Consider the following 168-residue polypeptide: Protein FAM163A (168 aa).

Residues V6–C26 form a helical membrane-spanning segment.

Belongs to the FAM163 family.

The protein resides in the membrane. The polypeptide is Protein FAM163A (Fam163a) (Mus musculus (Mouse)).